The primary structure comprises 412 residues: Peptidase T (412 aa).

A Zn(2+)-binding site is contributed by His-84. The active site involves Asp-86. Asp-146 lines the Zn(2+) pocket. The active-site Proton acceptor is Glu-179. Zn(2+) contacts are provided by Glu-180, Asp-202, and His-385.

This sequence belongs to the peptidase M20B family. Zn(2+) is required as a cofactor.

The protein localises to the cytoplasm. The catalysed reaction is Release of the N-terminal residue from a tripeptide.. In terms of biological role, cleaves the N-terminal amino acid of tripeptides. The protein is Peptidase T of Haemophilus influenzae (strain ATCC 51907 / DSM 11121 / KW20 / Rd).